The sequence spans 370 residues: Translocating chain-associated membrane protein 2 (370 aa).

Over 1 to 22 (MAFRRRTKSYPLFSQEFIIHNH) the chain is Cytoplasmic. Residues 23–43 (ADIGFCLVLCVLIGLMFEVTA) form a helical membrane-spanning segment. Residues 44 to 75 (KTAFLFILPQYNISVPTADSETVHYHYGPKDL) lie on the Extracellular side of the membrane. N55 carries N-linked (GlcNAc...) asparagine glycosylation. Residues 76-96 (VTILFYVVITIIFHAVVQEYI) traverse the membrane as a helical segment. The Cytoplasmic segment spans residues 97–119 (LDKISKRLHLSKVKHSKFNESGQ). One can recognise a TLC domain in the interval 112-321 (SKFNESGQLL…HSQLRHWREY (210 aa)). The chain crosses the membrane as a helical span at residues 120–140 (LLVFHLSAVAWCFYVIVTEGY). Over 141–159 (LTNPRSLWEDYPHVYLSFQ) the chain is Extracellular. The chain crosses the membrane as a helical span at residues 160–180 (VKFFYLGQLAYWLHSLPELYF). At 181–191 (QKVRKEEVPRQ) the chain is on the cytoplasmic side. A helical membrane pass occupies residues 192 to 209 (LQYICLYLLHITGAYLLN). Over 210 to 214 (LSRLG) the chain is Extracellular. Residues 215–235 (LILLLLQYSTEALFHMARLFH) traverse the membrane as a helical segment. Topologically, residues 236 to 250 (FADENNERLFNAWAA) are cytoplasmic. A helical membrane pass occupies residues 251–271 (VFGVTRLFILTLAVLTIGFGL). Over 272–287 (ARVENQVFDPEKGNFN) the chain is Extracellular. A helical membrane pass occupies residues 288–308 (TLPCRLGMLLLVCVAQAWLMW). Residues 309–370 (RFIHSQLRHW…SSRTKKLKSP (62 aa)) are Cytoplasmic-facing. The tract at residues 332–370 (SAVPRPPAKLLKREPGYHENGVVKAENGTSSRTKKLKSP) is disordered.

It belongs to the TRAM family. Interacts with COL1A1. Interacts with SERCA2B.

It localises to the membrane. Its function is as follows. Necessary for collagen type I synthesis. May couple the activity of the ER Ca(2+) pump SERCA2B with the activity of the translocon. This coupling may increase the local Ca(2+) concentration at the site of collagen synthesis, and a high Ca(2+) concentration may be necessary for the function of molecular chaperones involved in collagen folding. Required for proper insertion of the first transmembrane helix N-terminus of TM4SF20 into the ER lumen, may act as a ceramide sensor for regulated alternative translocation (RAT). The sequence is that of Translocating chain-associated membrane protein 2 (Tram2) from Mus musculus (Mouse).